The primary structure comprises 299 residues: HTH-type transcriptional regulator CrgA (299 aa).

The region spanning 1 to 60 (MKTNSEELTVFVQVVESGSFSRAAEQLAMANSAVSRIVKRLEEKLGVNLLNRTTRQLSLT) is the HTH lysR-type domain. The segment at residues 20-39 (FSRAAEQLAMANSAVSRIVK) is a DNA-binding region (H-T-H motif).

Belongs to the LysR transcriptional regulatory family. In terms of assembly, forms oligomers. Oligomerization is required for DNA binding.

Its function is as follows. Involved in the regulation of bacterial adhesion to host epithelial cells. May play a central regulatory role in meningococcal adhesion, particularly in switching from initial adhesion to intimate adhesion by downregulating the bacterial surface structures that hinder this adhesion. During intimate adhesion, negatively regulates the expression of pilC1, encoding a pilus-associated protein, pilE, encoding the pilin, and sia genes, encoding the capsule. Also negatively regulates its own expression. May also regulate other genes that are involved in intimate adhesion. Binds specifically to the promoter region of pilC1 and crgA (both harboring a CREN element), and pilE and sia (both devoid of a CREN element). Acts through interaction with RNA polymerase (RNAP). Interaction with RNAP leads to the production of short abortive transcripts, suggesting that CrgA may act by preventing RNAP from clearing the promoter. This Neisseria meningitidis serogroup C (strain 8013) protein is HTH-type transcriptional regulator CrgA.